The chain runs to 397 residues: Tryptophan synthase beta chain (397 aa).

At Lys87 the chain carries N6-(pyridoxal phosphate)lysine.

The protein belongs to the TrpB family. In terms of assembly, tetramer of two alpha and two beta chains. The cofactor is pyridoxal 5'-phosphate.

It carries out the reaction (1S,2R)-1-C-(indol-3-yl)glycerol 3-phosphate + L-serine = D-glyceraldehyde 3-phosphate + L-tryptophan + H2O. The protein operates within amino-acid biosynthesis; L-tryptophan biosynthesis; L-tryptophan from chorismate: step 5/5. Functionally, the beta subunit is responsible for the synthesis of L-tryptophan from indole and L-serine. In Escherichia coli O127:H6 (strain E2348/69 / EPEC), this protein is Tryptophan synthase beta chain.